A 143-amino-acid polypeptide reads, in one-letter code: Nucleoside diphosphate kinase (143 aa).

6 residues coordinate ATP: K11, F59, R87, T93, R104, and N114. The Pros-phosphohistidine intermediate role is filled by H117.

This sequence belongs to the NDK family. As to quaternary structure, homotetramer. The cofactor is Mg(2+).

It localises to the cytoplasm. The catalysed reaction is a 2'-deoxyribonucleoside 5'-diphosphate + ATP = a 2'-deoxyribonucleoside 5'-triphosphate + ADP. It catalyses the reaction a ribonucleoside 5'-diphosphate + ATP = a ribonucleoside 5'-triphosphate + ADP. Its function is as follows. Major role in the synthesis of nucleoside triphosphates other than ATP. The ATP gamma phosphate is transferred to the NDP beta phosphate via a ping-pong mechanism, using a phosphorylated active-site intermediate. This is Nucleoside diphosphate kinase from Shewanella denitrificans (strain OS217 / ATCC BAA-1090 / DSM 15013).